Reading from the N-terminus, the 330-residue chain is Protein rlx (330 aa).

A disordered region spans residues 220–330; sequence LGEDYDKGGL…EKTRGFDLEL (111 aa). 2 stretches are compositionally biased toward basic and acidic residues: residues 237-269 and 279-330; these read NEQR…EWAR and QNRE…DLEL.

In terms of biological role, this protein is probably required for relaxation complex formation and plasmid mobilization by conjugative plasmids. This Staphylococcus aureus protein is Protein rlx (rlx).